A 218-amino-acid polypeptide reads, in one-letter code: ATP phosphoribosyltransferase (218 aa).

Belongs to the ATP phosphoribosyltransferase family. Short subfamily. In terms of assembly, heteromultimer composed of HisG and HisZ subunits.

The protein localises to the cytoplasm. It catalyses the reaction 1-(5-phospho-beta-D-ribosyl)-ATP + diphosphate = 5-phospho-alpha-D-ribose 1-diphosphate + ATP. It participates in amino-acid biosynthesis; L-histidine biosynthesis; L-histidine from 5-phospho-alpha-D-ribose 1-diphosphate: step 1/9. Its function is as follows. Catalyzes the condensation of ATP and 5-phosphoribose 1-diphosphate to form N'-(5'-phosphoribosyl)-ATP (PR-ATP). Has a crucial role in the pathway because the rate of histidine biosynthesis seems to be controlled primarily by regulation of HisG enzymatic activity. This is ATP phosphoribosyltransferase from Trichormus variabilis (strain ATCC 29413 / PCC 7937) (Anabaena variabilis).